Consider the following 580-residue polypeptide: Isocitrate lyase (580 aa).

Substrate is bound at residue 106 to 108 (SGW). Residue Asp-177 coordinates Mg(2+). The active-site Proton acceptor is Cys-215. Substrate-binding positions include 216 to 217 (GH), Arg-252, 441 to 445 (NLSPS), and Thr-476. The Microbody targeting signal motif lies at 578–580 (SRM).

Belongs to the isocitrate lyase/PEP mutase superfamily. Isocitrate lyase family. In terms of assembly, homotetramer. Mg(2+) serves as cofactor.

The protein resides in the glyoxysome. The catalysed reaction is D-threo-isocitrate = glyoxylate + succinate. Its pathway is carbohydrate metabolism; glyoxylate cycle; (S)-malate from isocitrate: step 1/2. Involved in storage lipid mobilization during the growth of higher plant seedling. This chain is Isocitrate lyase (ICL 8), found in Pinus taeda (Loblolly pine).